The chain runs to 951 residues: WD repeat-containing and planar cell polarity effector protein fritz (951 aa).

2 WD repeats span residues Pro-304 to Ala-343 and Gln-345 to Gln-384. Composition is skewed to polar residues over residues Thr-709–Pro-720, Ile-757–Pro-771, and Ser-818–Pro-828. Disordered stretches follow at residues Thr-709–Pro-776, Thr-816–His-883, and Glu-903–Val-951. A compositionally biased stretch (low complexity) spans Ser-930–Ser-942.

The protein belongs to the WD repeat fritz family.

It localises to the cell membrane. Its subcellular location is the cytoplasm. The protein localises to the cytoskeleton. The protein resides in the cilium axoneme. Functionally, probable effector of the planar cell polarity signaling pathway which regulates the septin cytoskeleton in both ciliogenesis and collective cell movements. Functions cell autonomously to regulate wing cell hair polarity and number. In Drosophila melanogaster (Fruit fly), this protein is WD repeat-containing and planar cell polarity effector protein fritz (frtz).